We begin with the raw amino-acid sequence, 302 residues long: Pyridoxal 5'-phosphate synthase subunit PdxS (302 aa).

Aspartate 32 is a binding site for D-ribose 5-phosphate. Catalysis depends on lysine 89, which acts as the Schiff-base intermediate with D-ribose 5-phosphate. Glycine 161 contributes to the D-ribose 5-phosphate binding site. Arginine 173 contacts D-glyceraldehyde 3-phosphate. D-ribose 5-phosphate is bound by residues glycine 222 and 243–244 (GS). The tract at residues 278–302 (GIGKGMKGQSNEDLPDEEKLQGRGV) is disordered.

It belongs to the PdxS/SNZ family. In terms of assembly, in the presence of PdxT, forms a dodecamer of heterodimers.

It carries out the reaction aldehydo-D-ribose 5-phosphate + D-glyceraldehyde 3-phosphate + L-glutamine = pyridoxal 5'-phosphate + L-glutamate + phosphate + 3 H2O + H(+). The protein operates within cofactor biosynthesis; pyridoxal 5'-phosphate biosynthesis. Catalyzes the formation of pyridoxal 5'-phosphate from ribose 5-phosphate (RBP), glyceraldehyde 3-phosphate (G3P) and ammonia. The ammonia is provided by the PdxT subunit. Can also use ribulose 5-phosphate and dihydroxyacetone phosphate as substrates, resulting from enzyme-catalyzed isomerization of RBP and G3P, respectively. The polypeptide is Pyridoxal 5'-phosphate synthase subunit PdxS (Halorubrum lacusprofundi (strain ATCC 49239 / DSM 5036 / JCM 8891 / ACAM 34)).